We begin with the raw amino-acid sequence, 119 residues long: Large ribosomal subunit protein uL22c (119 aa).

Belongs to the universal ribosomal protein uL22 family. Part of the 50S ribosomal subunit.

Its subcellular location is the plastid. The protein localises to the chloroplast. This protein binds specifically to 23S rRNA. Its function is as follows. The globular domain of the protein is located near the polypeptide exit tunnel on the outside of the subunit, while an extended beta-hairpin is found that lines the wall of the exit tunnel in the center of the 70S ribosome. In Marchantia polymorpha (Common liverwort), this protein is Large ribosomal subunit protein uL22c (rpl22).